The primary structure comprises 123 residues: Large ribosomal subunit protein uL18 (123 aa).

This sequence belongs to the universal ribosomal protein uL18 family. Part of the 50S ribosomal subunit; part of the 5S rRNA/L5/L18/L25 subcomplex. Contacts the 5S and 23S rRNAs.

In terms of biological role, this is one of the proteins that bind and probably mediate the attachment of the 5S RNA into the large ribosomal subunit, where it forms part of the central protuberance. The protein is Large ribosomal subunit protein uL18 of Chlamydia caviae (strain ATCC VR-813 / DSM 19441 / 03DC25 / GPIC) (Chlamydophila caviae).